An 869-amino-acid polypeptide reads, in one-letter code: Valine--tRNA ligase (869 aa).

Residues 47–57 (PYPTGNFHIGN) carry the 'HIGH' region motif. Positions 521–525 (KMSKS) match the 'KMSKS' region motif. Lysine 524 provides a ligand contact to ATP.

Belongs to the class-I aminoacyl-tRNA synthetase family. ValS type 2 subfamily.

The protein localises to the cytoplasm. The catalysed reaction is tRNA(Val) + L-valine + ATP = L-valyl-tRNA(Val) + AMP + diphosphate. Catalyzes the attachment of valine to tRNA(Val). As ValRS can inadvertently accommodate and process structurally similar amino acids such as threonine, to avoid such errors, it has a 'posttransfer' editing activity that hydrolyzes mischarged Thr-tRNA(Val) in a tRNA-dependent manner. The polypeptide is Valine--tRNA ligase (Methanosarcina mazei (strain ATCC BAA-159 / DSM 3647 / Goe1 / Go1 / JCM 11833 / OCM 88) (Methanosarcina frisia)).